Here is a 255-residue protein sequence, read N- to C-terminus: 4-diphosphocytidyl-2-C-methyl-D-erythritol kinase (255 aa).

Lys-9 is an active-site residue. 95 to 105 (PSQAGLGGGSS) serves as a coordination point for ATP. Residue Asp-137 is part of the active site.

It belongs to the GHMP kinase family. IspE subfamily.

The catalysed reaction is 4-CDP-2-C-methyl-D-erythritol + ATP = 4-CDP-2-C-methyl-D-erythritol 2-phosphate + ADP + H(+). Its pathway is isoprenoid biosynthesis; isopentenyl diphosphate biosynthesis via DXP pathway; isopentenyl diphosphate from 1-deoxy-D-xylulose 5-phosphate: step 3/6. Functionally, catalyzes the phosphorylation of the position 2 hydroxy group of 4-diphosphocytidyl-2C-methyl-D-erythritol. The protein is 4-diphosphocytidyl-2-C-methyl-D-erythritol kinase of Sulfurovum sp. (strain NBC37-1).